The following is a 229-amino-acid chain: 2,3-bisphosphoglycerate-dependent phosphoglycerate mutase (229 aa).

Residues 8 to 15, 21 to 22, R60, 87 to 90, K98, 114 to 115, and 183 to 184 contribute to the substrate site; these read RHGESAWN, TG, ERHY, RR, and GN. H9 serves as the catalytic Tele-phosphohistidine intermediate. Catalysis depends on E87, which acts as the Proton donor/acceptor.

The protein belongs to the phosphoglycerate mutase family. BPG-dependent PGAM subfamily. Homodimer.

It carries out the reaction (2R)-2-phosphoglycerate = (2R)-3-phosphoglycerate. It functions in the pathway carbohydrate degradation; glycolysis; pyruvate from D-glyceraldehyde 3-phosphate: step 3/5. Functionally, catalyzes the interconversion of 2-phosphoglycerate and 3-phosphoglycerate. The protein is 2,3-bisphosphoglycerate-dependent phosphoglycerate mutase of Polynucleobacter necessarius subsp. necessarius (strain STIR1).